The chain runs to 46 residues: Protein PsbN (46 aa).

Residues 10–30 traverse the membrane as a helical segment; the sequence is VSIAVLTALLGLTGFGIYTAF.

This sequence belongs to the PsbN family.

It is found in the cellular thylakoid membrane. Functionally, may play a role in photosystem I and II biogenesis. The sequence is that of Protein PsbN from Synechococcus sp. (strain RCC307).